The following is a 1940-amino-acid chain: Protein ORF1940 (1940 aa).

TPR repeat units lie at residues 119–153 (IKACSNAQCSPETVESNFQEAIRDYEAASSIALQY), 155–186 (FQSLAEQLSDAVNQLKTALSNYEKTVATLQQI), 480–513 (RLPDIRIGAIDAAKEKIGDLMSDFKEKISIGLHG), and 617–652 (GKSMGDKTVLTADYMEGEVLGLIKNYEADVKISPTS). Disordered regions lie at residues 1160–1239 (PSKV…PGAV) and 1519–1571 (KGPS…TVTS). Low complexity predominate over residues 1164-1185 (QNTTQPSATQNTTTQPTAQNTS). Over residues 1186–1200 (LPGATQNTTLPTPSK) the composition is skewed to polar residues. Low complexity-rich tracts occupy residues 1201-1235 (VQNTTQPSTTPNTTLSTPSTTPNTTTQPTVQNTSL), 1521-1539 (PSTTQNTTQPSTTPNMTPP), and 1561-1571 (TPGSGSQTVTS). A TPR 5 repeat occupies 1691-1724 (KDLNKSVGTSVVEEAKYNSTLQTYLAGLGIKDLN). Residues 1862–1940 (TTTHHITPPP…AEQAEQVLLI (79 aa)) are disordered. Residues 1868–1883 (TPPPPPPPPPPPPPPK) are compositionally biased toward pro residues. Residues 1884–1894 (TQTITTTTQIT) are compositionally biased toward low complexity. Residues 1895 to 1912 (PPSPPPTPPPPPPPPKSP) show a composition bias toward pro residues.

In Acidianus convivator (ATV), this protein is Protein ORF1940.